Consider the following 3999-residue polypeptide: Hybrid PKS-NRPS synthetase xenE (3999 aa).

One can recognise a Ketosynthase family 3 (KS3) domain in the interval 13–449 (REPIAVVGSG…GTNAHCIIEN (437 aa)). Residues Cys186, His325, and His369 each act as for beta-ketoacyl synthase activity in the active site. The Malonyl-CoA:ACP transacylase (MAT) domain occupies 562 to 879 (VFTGQGAQWP…TGLLNRGKDD (318 aa)). Positions 949-1084 (NPLLGSRTTD…GRVIVITGET (136 aa)) are N-terminal hotdog fold. Positions 949–1253 (NPLLGSRTTD…VVAFAEQTED (305 aa)) constitute a PKS/mFAS DH domain. The dehydratase (DH) domain stretch occupies residues 950-1252 (PLLGSRTTDV…RVVAFAEQTE (303 aa)). His981 acts as the Proton acceptor; for dehydratase activity in catalysis. Residues 1099–1253 (LVDIPEDRFY…VVAFAEQTED (155 aa)) form a C-terminal hotdog fold region. Asp1159 functions as the Proton donor; for dehydratase activity in the catalytic mechanism. Residues 1298 to 1593 (YMKQLVTLFP…FSGADSPMPE (296 aa)) are methyltransferase (cMeT) domain. Residues 2133 to 2306 (TYVLFGLTSD…AASILHLGAV (174 aa)) form the Ketoreductase (KR) domain. A Carrier 1 domain is found at 2414–2495 (EEILEIVQDA…QLVEYAIGSM (82 aa)). Ser2455 carries the O-(pantetheine 4'-phosphoryl)serine modification. Residues 2501-2573 (PNRADSAKAS…EESPSESVND (73 aa)) form a disordered region. Over residues 2526–2554 (SVSSSPSSLPKTSASGSSQQMSEGSSKTS) the composition is skewed to low complexity. The segment at 2580 to 3015 (EKVLPVSPGQ…EEVSLFTEQE (436 aa)) is condensation. Residues 3045 to 3453 (AVHTDKVALK…RIEGDTQIKL (409 aa)) are adenylation. A Carrier 2 domain is found at 3562 to 3642 (RKLTDTESKL…AMAAAIQDTS (81 aa)). The residue at position 3602 (Ser3602) is an O-(pantetheine 4'-phosphoryl)serine. A reductase-like (R) domain (R) region spans residues 3681 to 3900 (LTGATGFLGK…IDLITVEKAA (220 aa)).

In the C-terminal section; belongs to the NRP synthetase family.

The protein operates within mycotoxin biosynthesis. In terms of biological role, hybrid PKS-NRPS synthetase; part of the gene cluster that mediates the biosynthesis of xenoacremones such as xenoacremone A, a compound that shows inhibitory activity toward the PI3K/AKT signaling pathway and which has the ability to induce apoptosis of A549 lung cancer cells. Within the pathway, cooperation of the hybrid PKS-NRPS xenE and the trans-acting enoyl reductase xenG is responsible for the formation of the reduced tyrosine-nonaketide derivative. The PKS module of xenE acted in combination with the trans-acting enoyl reductase xenG to produce a double-methylated nonaketide attached to the ACP domain. In parallel, the adenylation (A) domain of the NRPS module activated L-tyrosine, which was then transferred to the ACP domain. The condensation (C) domain subsequently linked this group to the polyketide chain, forming an enzyme-bound amide. Reductive release by the C-terminal R domain afforded the aldehyde derivative. The alpha/beta hydrolase xenA then accelerates intramolecular nucleophilic attack to give a pyrrolidone derivative. Subsequently, three enzymes, xenF, xenD, and xenC, coordinately participate in the conversion to xenoacremone B. XenF catalyzes sigmatropic rearrangement to form an A-ring, which leads to an unusual intermediate with a hexane ring, which is required for the formation of the tricarbocyclic product. Epoxidation catalyzed by xenD and the formation of the paracyclophane ether catalyzed by xenC initiate a spontaneous intramolecular Diels-Alder (IMDA) reaction to yield xenoacremone B. Spontaneous hydration of xenoacremone B leads to the formation of xenoacremone A, which undergoes subsequent methylation to afford xenoacremone C. This is Hybrid PKS-NRPS synthetase xenE from Xenoacremonium sinensis (Endophyte fungus).